An 88-amino-acid polypeptide reads, in one-letter code: Small ribosomal subunit protein bS20 (88 aa).

Disordered regions lie at residues 1-29 (MANTAQARKRARQAVKQNEHNSSLRSKLR) and 69-88 (KNTASRQKSRLSAAIKAMAA).

This sequence belongs to the bacterial ribosomal protein bS20 family.

Its function is as follows. Binds directly to 16S ribosomal RNA. This Polynucleobacter asymbioticus (strain DSM 18221 / CIP 109841 / QLW-P1DMWA-1) (Polynucleobacter necessarius subsp. asymbioticus) protein is Small ribosomal subunit protein bS20.